We begin with the raw amino-acid sequence, 142 residues long: Large ribosomal subunit protein uL13 (142 aa).

Belongs to the universal ribosomal protein uL13 family. As to quaternary structure, part of the 50S ribosomal subunit.

Functionally, this protein is one of the early assembly proteins of the 50S ribosomal subunit, although it is not seen to bind rRNA by itself. It is important during the early stages of 50S assembly. This Haemophilus influenzae (strain PittGG) protein is Large ribosomal subunit protein uL13.